Consider the following 280-residue polypeptide: Hemin import ATP-binding protein HmuV (280 aa).

Residues 26 to 260 (LAAAGGLRVH…GLLSEVYDQP (235 aa)) enclose the ABC transporter domain. 59–66 (GPNGAGKS) provides a ligand contact to ATP.

It belongs to the ABC transporter superfamily. Heme (hemin) importer (TC 3.A.1.14.5) family. As to quaternary structure, the complex is composed of two ATP-binding proteins (HmuV), two transmembrane proteins (HmuU) and a solute-binding protein (HmuT).

Its subcellular location is the cell membrane. Functionally, part of the ABC transporter complex HmuTUV involved in hemin import. Responsible for energy coupling to the transport system. This Streptomyces coelicolor (strain ATCC BAA-471 / A3(2) / M145) protein is Hemin import ATP-binding protein HmuV.